Reading from the N-terminus, the 284-residue chain is Bifunctional protein FolD (284 aa).

Residue 166–168 (GAS) coordinates NADP(+).

The protein belongs to the tetrahydrofolate dehydrogenase/cyclohydrolase family. As to quaternary structure, homodimer.

The enzyme catalyses (6R)-5,10-methylene-5,6,7,8-tetrahydrofolate + NADP(+) = (6R)-5,10-methenyltetrahydrofolate + NADPH. It catalyses the reaction (6R)-5,10-methenyltetrahydrofolate + H2O = (6R)-10-formyltetrahydrofolate + H(+). It functions in the pathway one-carbon metabolism; tetrahydrofolate interconversion. Functionally, catalyzes the oxidation of 5,10-methylenetetrahydrofolate to 5,10-methenyltetrahydrofolate and then the hydrolysis of 5,10-methenyltetrahydrofolate to 10-formyltetrahydrofolate. The sequence is that of Bifunctional protein FolD from Legionella pneumophila (strain Paris).